Reading from the N-terminus, the 519-residue chain is MGISSIIIILFIIVLLKKLIKKEDRIHRINKNIPGPKSKLLVGNLFDLKGQVHEKLKEWYEQYGSVYRIEFGSVSTVVLTEYATLKEAFVDNGEIFQSRFQRKSRTTCNKGLNLANSNGEYFNHLKKTLSNEITNQKMKKNEKIIKIQVGLLSEFFNEISGGGGGGSGGSGISKEPINNIIKMYSLNVMLSLLFNIHFPYNNNSYQDELMSTITRYFKSTGLPYPSDFIPILYPFLKNKPKEYFEDYESVKKLITRITNEYQLKHMTEISNKSTIEEIENYQPTNILESLLKQYRLNKIPYDGVIGCLMDLILAGSDTTGNTCLFSLVALVNNSNIQEKLFNEISNAFNDDDGDELNGANDISNSLLKLSYFSDRIKTPYLVAFIKEVKRYYPCAPLSVPHLLTEDCEIQGYKIAKGTQVIQNIYSTHLSQSFCSNPLEFSPERFLDSTNEPKIITFGIGQRKCPGENIFEIEIYIFLVYLIKKFKFSHPIDDNLQLNDRGQFGLSLQCPQLNIKVESR.

Residues 1-21 (MGISSIIIILFIIVLLKKLIK) traverse the membrane as a helical segment. C464 is a heme binding site.

This sequence belongs to the cytochrome P450 family. The cofactor is heme.

Its subcellular location is the membrane. This is Probable cytochrome P450 513D1 (cyp513D1) from Dictyostelium discoideum (Social amoeba).